The primary structure comprises 519 residues: Dideacetyl fusicoccin A C-19 hydroxylase (519 aa).

Residues Leu-16 to Ser-36 traverse the membrane as a helical segment. 4 N-linked (GlcNAc...) asparagine glycosylation sites follow: Asn-177, Asn-327, Asn-414, and Asn-432. A heme-binding site is contributed by Cys-454.

The protein belongs to the cytochrome P450 family. Heme serves as cofactor.

It is found in the membrane. The protein operates within mycotoxin biosynthesis. Cytochrome P450 monooxygenase; part of the 2 gene clusters that mediate the biosynthesis of fusicoccins, diterpene glucosides that display phytohormone-like activity and function as potent activators of plasma membrane H(+)-ATPases in plants by modifying 14-3-3 proteins and cause the plant disease constriction canker. The first step in the pathway is performed by the fusicoccadiene synthase PaFS that possesses both prenyl transferase and terpene cyclase activity, converting isopentenyl diphosphate and dimethylallyl diphosphate into geranylgeranyl diphosphate (GGDP) and successively converting GGDP into fusicocca-2,10(14)-diene, a precursor for fusicoccin H. The second step is the oxidation at the C-8 position by the cytochrome P450 monooxygenase PaP450-2 to yield fusicocca-2,10(14)-diene-8-beta-ol. The cytochrome P450 monooxygenase PaP450-1 then catalyzes the hydroxylation at the C-16 position to produce fusicocca-2,10(14)-diene-8-beta,16-diol. The dioxygenase fc-dox then catalyzes the 16-oxydation of fusicocca-2,10(14)-diene-8-beta,16-diol to yield an aldehyde (8-beta-hydroxyfusicocca-1,10(14)-dien-16-al). The short-chain dehydrogenase/reductase fc-sdr catalyzes the reduction of the aldehyde to yield fusicocca-1,10(14)-diene-8-beta,16-diol. The next step is the hydroxylation at C-9 performed by the cytochrome P450 monooxygenase PaP450-3 that leads to fusicoccin H aglycon which is glycosylated to fusicoccin H by the O-glycosyltransferase PaGT. Hydroxylation at C-12 by the cytochrome P450 monooxygenase PaP450-4 leads then to the production of fusicoccin Q and is followed by methylation by the O-methyltransferase PaMT to yield fusicoccin P. Fusicoccin P is further converted to fusicoccin J via prenylation by the O-glucose prenyltransferase PaPT. Cytochrome P450 monooxygenase PaP450-5 then performs hydroxylation at C-19 to yield dideacetyl-fusicoccin A which is acetylated to 3'-O-deacetyl-fusicoccin A by the O-acetyltransferase PaAT-2. Finally, a another acetylation by the O-acetyltransferase PaAT-1 yields fusicoccin A. The protein is Dideacetyl fusicoccin A C-19 hydroxylase of Phomopsis amygdali (Fusicoccum amygdali).